Consider the following 311-residue polypeptide: Phosphopantothenate--cysteine ligase (311 aa).

The residue at position 2 (alanine 2) is an N-acetylalanine.

This sequence belongs to the PPC synthetase family. As to quaternary structure, homodimer.

It catalyses the reaction (R)-4'-phosphopantothenate + L-cysteine + ATP = N-[(R)-4-phosphopantothenoyl]-L-cysteine + AMP + diphosphate + H(+). The catalysed reaction is (R)-4'-phosphopantothenate + L-cysteine + CTP = N-[(R)-4-phosphopantothenoyl]-L-cysteine + CMP + diphosphate + H(+). The protein operates within cofactor biosynthesis; coenzyme A biosynthesis; CoA from (R)-pantothenate: step 2/5. Functionally, catalyzes the second step in the biosynthesis of coenzyme A from vitamin B5, where cysteine is conjugated to 4'-phosphopantothenate to form 4-phosphopantothenoylcysteine. Has a preference for ATP over CTP as a cosubstrate. The protein is Phosphopantothenate--cysteine ligase (PPCS) of Homo sapiens (Human).